The chain runs to 1067 residues: Myocardin-related transcription factor B (1067 aa).

3 RPEL repeats span residues 46–71 (EVLQLRLQQRRTREQLVDQGIMPPLK), 90–115 (NFLKHKIRSRPNRSELVRMHILEETL), and 134–159 (DDLNEKIAQRPGPLELVEKNILPVDL). Disordered regions lie at residues 175–223 (NLDT…NTTI) and 249–286 (PLSCIVSKPGPALIKQTQPKHTEKPRSKKSKDPKPRVK). Composition is skewed to polar residues over residues 193–203 (QPASQESQGSA) and 212–223 (SDSSSPVSNTTI). A compositionally biased stretch (basic and acidic residues) spans 268–283 (KHTEKPRSKKSKDPKP). Residues 390–424 (LDDMKVAELKMELKLRGLPVSGTKMDLIERLKPFQ) form the SAP domain. Residues 540-594 (GNTPNVELDAVEKDRKLQEKEKQIEELKRKLEQEQKLVEVLKKQLELEKRGQQQQ) are a coiled coil. Polar residues predominate over residues 799–819 (ISTSAQPQRSTQLTAVQNGPT). The disordered stretch occupies residues 799–829 (ISTSAQPQRSTQLTAVQNGPTSLHEKSSTPP).

Interacts with SRF.

The protein resides in the nucleus. In terms of biological role, poor transcriptional factor which uses the canonical single or multiple CArG boxes DNA sequence. Acts as a cofactor of serum response factor (SRF) with the potential to modulate SRF target genes. This is Myocardin-related transcription factor B (mrtfb) from Xenopus laevis (African clawed frog).